A 361-amino-acid chain; its full sequence is Chorismate synthase (361 aa).

NADP(+) contacts are provided by Arg-48 and Arg-54. FMN is bound by residues Arg-125–Ser-127, Asn-238–Ala-239, Gly-278, Lys-293–Ser-297, and Arg-319.

Belongs to the chorismate synthase family. As to quaternary structure, homotetramer. FMNH2 is required as a cofactor.

The catalysed reaction is 5-O-(1-carboxyvinyl)-3-phosphoshikimate = chorismate + phosphate. Its pathway is metabolic intermediate biosynthesis; chorismate biosynthesis; chorismate from D-erythrose 4-phosphate and phosphoenolpyruvate: step 7/7. In terms of biological role, catalyzes the anti-1,4-elimination of the C-3 phosphate and the C-6 proR hydrogen from 5-enolpyruvylshikimate-3-phosphate (EPSP) to yield chorismate, which is the branch point compound that serves as the starting substrate for the three terminal pathways of aromatic amino acid biosynthesis. This reaction introduces a second double bond into the aromatic ring system. The sequence is that of Chorismate synthase from Escherichia coli O139:H28 (strain E24377A / ETEC).